A 460-amino-acid polypeptide reads, in one-letter code: MATGKIIQVIGAVVDVEFPQDAVPKVYNALEVEGTTEKLVLEVQQQLGGGVVRCIAMGSSDGLSRGLKVTNLEHPIEVPVGKATLGRIMNVLGEPIDMKGPIGEEERWAIHREAPSYEELASSQDLLETGIKVMDLICPFAKGGKVGLFGGAGVGKTVNMMELIRNIAIEHSGYSVFAGVGERTREGNDFYHEMTDSNVLDKVSLVYGQMNEPPGNRLRVALTGLTMAEKFRDEGRDVLLFIDNIYRYTLAGTEVSALLGRMPSAVGYQPTLAEEMGVLQERITSTKTGSITSVQAVYVPADDLTDPSPATTFAHLDATVVLSRQIASLGIYPAVDPLDSTSRQLDPLVVGQEHYDVARGVQSILQRYQELKDIIAILGMDELSEDDKLVVSRARKIQRFLSQPFFVAEVFTGSPGKFVSLKDTIRGFKGIMNGDYDHLPEQAFYMVGTIEEAVEKAKKL.

150–157 contributes to the ATP binding site; that stretch reads GGAGVGKT.

The protein belongs to the ATPase alpha/beta chains family. As to quaternary structure, F-type ATPases have 2 components, CF(1) - the catalytic core - and CF(0) - the membrane proton channel. CF(1) has five subunits: alpha(3), beta(3), gamma(1), delta(1), epsilon(1). CF(0) has three main subunits: a(1), b(2) and c(9-12). The alpha and beta chains form an alternating ring which encloses part of the gamma chain. CF(1) is attached to CF(0) by a central stalk formed by the gamma and epsilon chains, while a peripheral stalk is formed by the delta and b chains.

The protein resides in the cell inner membrane. It carries out the reaction ATP + H2O + 4 H(+)(in) = ADP + phosphate + 5 H(+)(out). Produces ATP from ADP in the presence of a proton gradient across the membrane. The catalytic sites are hosted primarily by the beta subunits. The protein is ATP synthase subunit beta of Yersinia pestis bv. Antiqua (strain Angola).